A 2378-amino-acid chain; its full sequence is Dimodular nonribosomal peptide synthase (2378 aa).

Carrier domains follow at residues 961–1036 and 2036–2111; these read APRT…DLAQ and GPRT…EMGS. O-(pantetheine 4'-phosphoryl)serine occurs at positions 996 and 2071.

The protein belongs to the ATP-dependent AMP-binding enzyme family. Requires pantetheine 4'-phosphate as cofactor.

The enzyme catalyses holo-[peptidyl-carrier protein] + L-threonine + ATP = L-threonyl-[peptidyl-carrier protein] + AMP + diphosphate. The catalysed reaction is holo-[peptidyl-carrier protein] + glycine + ATP = glycyl-[peptidyl-carrier protein] + AMP + diphosphate. It functions in the pathway siderophore biosynthesis; bacillibactin biosynthesis. In terms of biological role, specifically adenylates L-threonine and, to a lesser extent, glycine and covalently loads both amino acids onto their corresponding peptidyl carrier domains. The chain is Dimodular nonribosomal peptide synthase (dhbF) from Bacillus subtilis (strain 168).